The chain runs to 51 residues: Large ribosomal subunit protein bL33 (51 aa).

It belongs to the bacterial ribosomal protein bL33 family.

This is Large ribosomal subunit protein bL33 from Hahella chejuensis (strain KCTC 2396).